We begin with the raw amino-acid sequence, 333 residues long: Cell division protein ZipA (333 aa).

Topologically, residues 1–5 (MQELR) are periplasmic. The helical transmembrane segment at 6 to 26 (LVLILVGALAIAALLFHGLWT) threads the bilayer. Residues 27–333 (SRKETSSKFG…KQRVKVFCRK (307 aa)) lie on the Cytoplasmic side of the membrane. Residues 72 to 81 (KEPAFAREEV) show a composition bias toward basic and acidic residues. Residues 72–119 (KEPAFAREEVPTSDDPLFEGTVSSESNKFTQQEKPTVQQAQPQPQPQP) form a disordered region. A compositionally biased stretch (polar residues) spans 92–107 (TVSSESNKFTQQEKPT). Positions 108–119 (VQQAQPQPQPQP) are enriched in low complexity.

The protein belongs to the ZipA family. Interacts with FtsZ via their C-terminal domains.

It is found in the cell inner membrane. Its function is as follows. Essential cell division protein that stabilizes the FtsZ protofilaments by cross-linking them and that serves as a cytoplasmic membrane anchor for the Z ring. Also required for the recruitment to the septal ring of downstream cell division proteins. This is Cell division protein ZipA from Aliivibrio fischeri (strain ATCC 700601 / ES114) (Vibrio fischeri).